The sequence spans 210 residues: Glutathione S-transferase 4 (210 aa).

Positions 1–80 (MDFYYLPLSA…YLVEKYGKQD (80 aa)) constitute a GST N-terminal domain. Glutathione-binding positions include Ser9, 50–52 (HTI), and 64–66 (ESR). One can recognise a GST C-terminal domain in the interval 87–208 (CPKKRALINQ…AGALEMKTLI (122 aa)).

It belongs to the GST superfamily. Theta family. As to quaternary structure, homodimer.

It carries out the reaction RX + glutathione = an S-substituted glutathione + a halide anion + H(+). Functionally, conjugation of reduced glutathione to a wide number of exogenous and endogenous hydrophobic electrophiles. The protein is Glutathione S-transferase 4 (Gst4) of Musca domestica (House fly).